A 971-amino-acid chain; its full sequence is Exportin-2 (971 aa).

Positions 29–102 (AEKFLESVEG…KANIVNLMLT (74 aa)) constitute an Importin N-terminal domain.

The protein belongs to the XPO2/CSE1 family. In terms of assembly, interacts with cftr. In terms of tissue distribution, detected in larval gut, liver, exocrine pancreas and part of the brain and retina at 96 hpf.

It localises to the cytoplasm. The protein localises to the nucleus. It is found in the apical cell membrane. The protein resides in the basal cell membrane. Its subcellular location is the lateral cell membrane. In terms of biological role, export receptor for importin alpha. Mediates importin-alpha re-export from the nucleus to the cytoplasm after import substrates have been released into the nucleoplasm. Negatively regulates fluid secretion and plays a role in fluid homeostasis by down-regulating cftr activity. The protein is Exportin-2 (cse1l) of Danio rerio (Zebrafish).